Reading from the N-terminus, the 245-residue chain is Ribonuclease 3 (245 aa).

Residues 17 to 146 (FTDKMKSLGL…FVGALYLDQG (130 aa)) form the RNase III domain. Glu-59 contacts Mg(2+). Asp-63 is an active-site residue. The Mg(2+) site is built by Asp-132 and Glu-135. Residue Glu-135 is part of the active site. A DRBM domain is found at 172 to 241 (DFKTQFQEYV…AEQAYKLMKN (70 aa)).

The protein belongs to the ribonuclease III family. Homodimer. It depends on Mg(2+) as a cofactor.

Its subcellular location is the cytoplasm. The catalysed reaction is Endonucleolytic cleavage to 5'-phosphomonoester.. In terms of biological role, digests double-stranded RNA. Involved in the processing of primary rRNA transcript to yield the immediate precursors to the large and small rRNAs (23S and 16S). Processes some mRNAs, and tRNAs when they are encoded in the rRNA operon. Processes pre-crRNA and tracrRNA of type II CRISPR loci if present in the organism. In Staphylococcus epidermidis (strain ATCC 35984 / DSM 28319 / BCRC 17069 / CCUG 31568 / BM 3577 / RP62A), this protein is Ribonuclease 3.